A 446-amino-acid polypeptide reads, in one-letter code: 5-methylthioadenosine/S-adenosylhomocysteine deaminase (446 aa).

2 residues coordinate Zn(2+): histidine 72 and histidine 74. The substrate site is built by glutamate 101 and histidine 194. Histidine 221 contributes to the Zn(2+) binding site. The substrate site is built by glutamate 224 and aspartate 309. Aspartate 309 contributes to the Zn(2+) binding site.

It belongs to the metallo-dependent hydrolases superfamily. MTA/SAH deaminase family. Zn(2+) serves as cofactor.

The enzyme catalyses S-adenosyl-L-homocysteine + H2O + H(+) = S-inosyl-L-homocysteine + NH4(+). It catalyses the reaction S-methyl-5'-thioadenosine + H2O + H(+) = S-methyl-5'-thioinosine + NH4(+). Its function is as follows. Catalyzes the deamination of 5-methylthioadenosine and S-adenosyl-L-homocysteine into 5-methylthioinosine and S-inosyl-L-homocysteine, respectively. Is also able to deaminate adenosine. The chain is 5-methylthioadenosine/S-adenosylhomocysteine deaminase from Saccharophagus degradans (strain 2-40 / ATCC 43961 / DSM 17024).